Consider the following 121-residue polypeptide: Small ribosomal subunit protein uS13 (121 aa).

The interval 97-121 is disordered; sequence VRGQRTRTNARTRRGARKTVAGKKK. Positions 100 to 121 are enriched in basic residues; that stretch reads QRTRTNARTRRGARKTVAGKKK.

The protein belongs to the universal ribosomal protein uS13 family. In terms of assembly, part of the 30S ribosomal subunit. Forms a loose heterodimer with protein S19. Forms two bridges to the 50S subunit in the 70S ribosome.

Located at the top of the head of the 30S subunit, it contacts several helices of the 16S rRNA. In the 70S ribosome it contacts the 23S rRNA (bridge B1a) and protein L5 of the 50S subunit (bridge B1b), connecting the 2 subunits; these bridges are implicated in subunit movement. Contacts the tRNAs in the A and P-sites. The chain is Small ribosomal subunit protein uS13 from Synechococcus sp. (strain WH7803).